Reading from the N-terminus, the 358-residue chain is DnaJ homolog subfamily B member 11 (358 aa).

The N-terminal stretch at 1–22 (MAPQNLGTLCLLLLYLLGAAIA) is a signal peptide. Positions 25–90 (DFYKILGVPR…EKRKQYDTYG (66 aa)) constitute a J domain. T188 is subject to Phosphothreonine. N-linked (GlcNAc...) asparagine glycosylation is present at N261.

As to quaternary structure, part of a large chaperone multiprotein complex comprising DNAJB11, HSP90B1, HSPA5, HYOU, PDIA2, PDIA4, PDIA6, PPIB, SDF2L1, UGGT1 and very small amounts of ERP29, but not, or at very low levels, CALR nor CANX. Binds to denatured substrates in an ATP-independent manner. Interacts via the J domain with HSPA5 in an ATP-dependent manner. In terms of processing, contains high-mannose Endo H-sensitive carbohydrates. Cys-169, Cys-171, Cys-193 and Cys-196 form intramolecular disulfide bonds. The preferential partner for each Cys is not known. Pancreas.

The protein resides in the endoplasmic reticulum lumen. Functionally, as a co-chaperone for HSPA5 it is required for proper folding, trafficking or degradation of proteins. Binds directly to both unfolded proteins that are substrates for ERAD and nascent unfolded peptide chains, but dissociates from the HSPA5-unfolded protein complex before folding is completed. May help recruiting HSPA5 and other chaperones to the substrate. Stimulates HSPA5 ATPase activity. It is necessary for maturation and correct trafficking of PKD1. The sequence is that of DnaJ homolog subfamily B member 11 (DNAJB11) from Canis lupus familiaris (Dog).